Reading from the N-terminus, the 140-residue chain is Small ribosomal subunit protein uS12 (140 aa).

Position 102 is a 3-methylthioaspartic acid (Asp102).

Belongs to the universal ribosomal protein uS12 family. Part of the 30S ribosomal subunit. Contacts proteins S8 and S17. May interact with IF1 in the 30S initiation complex.

Functionally, with S4 and S5 plays an important role in translational accuracy. Its function is as follows. Interacts with and stabilizes bases of the 16S rRNA that are involved in tRNA selection in the A site and with the mRNA backbone. Located at the interface of the 30S and 50S subunits, it traverses the body of the 30S subunit contacting proteins on the other side and probably holding the rRNA structure together. The combined cluster of proteins S8, S12 and S17 appears to hold together the shoulder and platform of the 30S subunit. The protein is Small ribosomal subunit protein uS12 of Geobacillus stearothermophilus (Bacillus stearothermophilus).